The primary structure comprises 760 residues: Penicillin-binding protein 1B (760 aa).

Over 1 to 8 (MFFNFKKY) the chain is Cytoplasmic. A helical; Signal-anchor for type II membrane protein membrane pass occupies residues 9-29 (FLIKVFFFVLILTLCYGLYLY). The Extracellular portion of the chain corresponds to 30–760 (VKINRFINGK…NFLFWLKNLF (731 aa)). The segment at 136–308 (FRLEPKLIAM…SLYSPWTNPN (173 aa)) is transglycosylase. The active-site Proton donor; for transglycosylase activity is E174. The transpeptidase stretch occupies residues 392–684 (EQAVKIEIPI…SSGAMQIYKR (293 aa)). S451 (acyl-ester intermediate; for transpeptidase activity) is an active-site residue.

This sequence in the N-terminal section; belongs to the glycosyltransferase 51 family. It in the C-terminal section; belongs to the transpeptidase family.

The protein localises to the cell membrane. The enzyme catalyses [GlcNAc-(1-&gt;4)-Mur2Ac(oyl-L-Ala-gamma-D-Glu-L-Lys-D-Ala-D-Ala)](n)-di-trans,octa-cis-undecaprenyl diphosphate + beta-D-GlcNAc-(1-&gt;4)-Mur2Ac(oyl-L-Ala-gamma-D-Glu-L-Lys-D-Ala-D-Ala)-di-trans,octa-cis-undecaprenyl diphosphate = [GlcNAc-(1-&gt;4)-Mur2Ac(oyl-L-Ala-gamma-D-Glu-L-Lys-D-Ala-D-Ala)](n+1)-di-trans,octa-cis-undecaprenyl diphosphate + di-trans,octa-cis-undecaprenyl diphosphate + H(+). It carries out the reaction Preferential cleavage: (Ac)2-L-Lys-D-Ala-|-D-Ala. Also transpeptidation of peptidyl-alanyl moieties that are N-acyl substituents of D-alanine.. It participates in cell wall biogenesis; peptidoglycan biosynthesis. Its function is as follows. Cell wall formation. Synthesis of cross-linked peptidoglycan from the lipid intermediates. The enzyme has a penicillin-insensitive transglycosylase N-terminal domain (formation of linear glycan strands) and a penicillin-sensitive transpeptidase C-terminal domain (cross-linking of the peptide subunits). The polypeptide is Penicillin-binding protein 1B (mrcB) (Buchnera aphidicola subsp. Acyrthosiphon pisum (strain APS) (Acyrthosiphon pisum symbiotic bacterium)).